The sequence spans 479 residues: Ribulose bisphosphate carboxylase large chain (479 aa).

A propeptide spanning residues 1–2 (MS) is cleaved from the precursor. Residues asparagine 123 and threonine 173 each contribute to the substrate site. The Proton acceptor role is filled by lysine 175. Lysine 177 is a binding site for substrate. 3 residues coordinate Mg(2+): lysine 201, aspartate 203, and glutamate 204. N6-carboxylysine is present on lysine 201. Phosphoserine is present on serine 208. Histidine 294 (proton acceptor) is an active-site residue. Arginine 295 and histidine 327 together coordinate substrate. Threonine 330 is modified (phosphothreonine). Residue serine 379 participates in substrate binding.

It belongs to the RuBisCO large chain family. Type I subfamily. As to quaternary structure, heterohexadecamer of 8 large chains and 8 small chains; disulfide-linked. The disulfide link is formed within the large subunit homodimers. Requires Mg(2+) as cofactor. In terms of processing, the disulfide bond which can form in the large chain dimeric partners within the hexadecamer appears to be associated with oxidative stress and protein turnover.

The protein resides in the plastid. It is found in the chloroplast. The catalysed reaction is 2 (2R)-3-phosphoglycerate + 2 H(+) = D-ribulose 1,5-bisphosphate + CO2 + H2O. The enzyme catalyses D-ribulose 1,5-bisphosphate + O2 = 2-phosphoglycolate + (2R)-3-phosphoglycerate + 2 H(+). RuBisCO catalyzes two reactions: the carboxylation of D-ribulose 1,5-bisphosphate, the primary event in carbon dioxide fixation, as well as the oxidative fragmentation of the pentose substrate in the photorespiration process. Both reactions occur simultaneously and in competition at the same active site. This chain is Ribulose bisphosphate carboxylase large chain, found in Olimarabidopsis pumila (Dwarf rocket).